An 82-amino-acid chain; its full sequence is Small ribosomal subunit protein bS20 (82 aa).

This sequence belongs to the bacterial ribosomal protein bS20 family.

Binds directly to 16S ribosomal RNA. The sequence is that of Small ribosomal subunit protein bS20 from Streptococcus pyogenes serotype M12 (strain MGAS2096).